The primary structure comprises 400 residues: Serine/threonine transporter SstT (400 aa).

Helical transmembrane passes span 9 to 29 (LVTQIAIAVVIGIVLAAVWPA), 36 to 56 (ILGSLFISALKAVAPVLVFVL), 75 to 95 (VLVLYAVGTLAAATVGVVASM), 134 to 154 (ALLEANYIGILAWAIALGLAL), 175 to 195 (VIQLVIRLAPLGILGLVASTF), 209 to 229 (LLAVLLGCMLFVALVVNPLIV), 281 to 301 (IAIPLGATINMAGAAITISVL), 323 to 343 (VVASLCACGASGVAGGSLLLI), and 349 to 369 (LFGIGNDVAMQVVAIGFIIGI).

Belongs to the dicarboxylate/amino acid:cation symporter (DAACS) (TC 2.A.23) family.

It is found in the cell inner membrane. The enzyme catalyses L-serine(in) + Na(+)(in) = L-serine(out) + Na(+)(out). It carries out the reaction L-threonine(in) + Na(+)(in) = L-threonine(out) + Na(+)(out). Functionally, involved in the import of serine and threonine into the cell, with the concomitant import of sodium (symport system). The protein is Serine/threonine transporter SstT of Acidovorax sp. (strain JS42).